A 341-amino-acid chain; its full sequence is Methionine import ATP-binding protein MetN 1 (341 aa).

The ABC transporter domain maps to Ile2–Val241. Gly38 to Ser45 contributes to the ATP binding site.

Belongs to the ABC transporter superfamily. Methionine importer (TC 3.A.1.24) family. The complex is composed of two ATP-binding proteins (MetN), two transmembrane proteins (MetI) and a solute-binding protein (MetQ).

It localises to the cell membrane. It catalyses the reaction L-methionine(out) + ATP + H2O = L-methionine(in) + ADP + phosphate + H(+). The catalysed reaction is D-methionine(out) + ATP + H2O = D-methionine(in) + ADP + phosphate + H(+). In terms of biological role, part of the ABC transporter complex MetNIQ involved in methionine import. Responsible for energy coupling to the transport system. The polypeptide is Methionine import ATP-binding protein MetN 1 (Staphylococcus aureus (strain MRSA252)).